Reading from the N-terminus, the 466-residue chain is UDP-N-acetylmuramoylalanine--D-glutamate ligase (466 aa).

121–127 (GTNGKST) contacts ATP.

This sequence belongs to the MurCDEF family.

The protein localises to the cytoplasm. The catalysed reaction is UDP-N-acetyl-alpha-D-muramoyl-L-alanine + D-glutamate + ATP = UDP-N-acetyl-alpha-D-muramoyl-L-alanyl-D-glutamate + ADP + phosphate + H(+). The protein operates within cell wall biogenesis; peptidoglycan biosynthesis. Its function is as follows. Cell wall formation. Catalyzes the addition of glutamate to the nucleotide precursor UDP-N-acetylmuramoyl-L-alanine (UMA). The protein is UDP-N-acetylmuramoylalanine--D-glutamate ligase of Mesorhizobium japonicum (strain LMG 29417 / CECT 9101 / MAFF 303099) (Mesorhizobium loti (strain MAFF 303099)).